Here is a 438-residue protein sequence, read N- to C-terminus: Na(+)/H(+) antiporter NhaA (438 aa).

Transmembrane regions (helical) follow at residues 23-43, 62-82, 104-124, 133-153, 162-182, 185-205, 221-241, 302-322, 337-357, 372-392, and 410-430; these read FGGIFLFLNAVLAMVVANSFL, FFIGFSLHNWIDDVLMALFFL, SFPVIAAIGGMIAPGLIYFFL, GFGIPMATDIAFALGVIMLLG, VFLITLAVADDLGAIVVIALF, TNLKFAWLLGALGVVLVLAVL, VLLWFCVHQSGIHATIAAVIL, FLAPISGYFIMPLFAFANAGV, LGVILGLCLGKPLGIFLITFI, WWHILGAGLLAGIGFTMSMFI, and IAILLGSLISGIIGALYLFAL.

It belongs to the NhaA Na(+)/H(+) (TC 2.A.33) antiporter family.

The protein resides in the cell inner membrane. The catalysed reaction is Na(+)(in) + 2 H(+)(out) = Na(+)(out) + 2 H(+)(in). Na(+)/H(+) antiporter that extrudes sodium in exchange for external protons. The protein is Na(+)/H(+) antiporter NhaA of Helicobacter pylori (strain ATCC 700392 / 26695) (Campylobacter pylori).